The primary structure comprises 77 residues: Large ribosomal subunit protein uL29 (77 aa).

This sequence belongs to the universal ribosomal protein uL29 family.

In Corynebacterium urealyticum (strain ATCC 43042 / DSM 7109), this protein is Large ribosomal subunit protein uL29.